Consider the following 72-residue polypeptide: Protein SlyX (72 aa).

The disordered stretch occupies residues 53–72; the sequence is KSSQSSMLARPEDETPPPHY.

This sequence belongs to the SlyX family.

The chain is Protein SlyX from Proteus mirabilis (strain HI4320).